A 272-amino-acid polypeptide reads, in one-letter code: HMP-PP phosphatase (272 aa).

Aspartate 8 (nucleophile) is an active-site residue. Mg(2+)-binding residues include aspartate 8, aspartate 10, and aspartate 212.

Belongs to the HAD-like hydrolase superfamily. Cof family. Mg(2+) serves as cofactor.

The enzyme catalyses 4-amino-2-methyl-5-(diphosphooxymethyl)pyrimidine + H2O = 4-amino-2-methyl-5-(phosphooxymethyl)pyrimidine + phosphate + H(+). Its function is as follows. Catalyzes the hydrolysis of 4-amino-2-methyl-5-hydroxymethylpyrimidine pyrophosphate (HMP-PP) to 4-amino-2-methyl-5-hydroxymethylpyrimidine phosphate (HMP-P). The protein is HMP-PP phosphatase of Salmonella agona (strain SL483).